Here is a 146-residue protein sequence, read N- to C-terminus: D-aminoacyl-tRNA deacylase (146 aa).

The short motif at 137–138 is the Gly-cisPro motif, important for rejection of L-amino acids element; sequence GP.

This sequence belongs to the DTD family. In terms of assembly, homodimer.

The protein resides in the cytoplasm. The enzyme catalyses glycyl-tRNA(Ala) + H2O = tRNA(Ala) + glycine + H(+). It catalyses the reaction a D-aminoacyl-tRNA + H2O = a tRNA + a D-alpha-amino acid + H(+). Its function is as follows. An aminoacyl-tRNA editing enzyme that deacylates mischarged D-aminoacyl-tRNAs. Also deacylates mischarged glycyl-tRNA(Ala), protecting cells against glycine mischarging by AlaRS. Acts via tRNA-based rather than protein-based catalysis; rejects L-amino acids rather than detecting D-amino acids in the active site. By recycling D-aminoacyl-tRNA to D-amino acids and free tRNA molecules, this enzyme counteracts the toxicity associated with the formation of D-aminoacyl-tRNA entities in vivo and helps enforce protein L-homochirality. The sequence is that of D-aminoacyl-tRNA deacylase from Hahella chejuensis (strain KCTC 2396).